The sequence spans 348 residues: Probable protein phosphatase 2C 35 (348 aa).

Low complexity predominate over residues 11–24; the sequence is RYPSSSSDGDSRGP. The disordered stretch occupies residues 11–40; sequence RYPSSSSDGDSRGPLEANGVLKGKDQKPLG. Positions 52 to 342 constitute a PPM-type phosphatase domain; the sequence is VYSVLSQRGY…DDITIIIVQI (291 aa). Asp93, Gly94, Asp289, and Asp333 together coordinate Mn(2+).

This sequence belongs to the PP2C family. It depends on Mg(2+) as a cofactor. The cofactor is Mn(2+).

It catalyses the reaction O-phospho-L-seryl-[protein] + H2O = L-seryl-[protein] + phosphate. The enzyme catalyses O-phospho-L-threonyl-[protein] + H2O = L-threonyl-[protein] + phosphate. In Arabidopsis thaliana (Mouse-ear cress), this protein is Probable protein phosphatase 2C 35.